We begin with the raw amino-acid sequence, 323 residues long: Lipoyl synthase (323 aa).

Residues cysteine 61, cysteine 66, cysteine 72, cysteine 87, cysteine 91, cysteine 94, and serine 300 each coordinate [4Fe-4S] cluster. One can recognise a Radical SAM core domain in the interval 73 to 289; it reads WDKKHATFMI…ETVAYSKGFL (217 aa).

Belongs to the radical SAM superfamily. Lipoyl synthase family. The cofactor is [4Fe-4S] cluster.

It is found in the cytoplasm. The enzyme catalyses [[Fe-S] cluster scaffold protein carrying a second [4Fe-4S](2+) cluster] + N(6)-octanoyl-L-lysyl-[protein] + 2 oxidized [2Fe-2S]-[ferredoxin] + 2 S-adenosyl-L-methionine + 4 H(+) = [[Fe-S] cluster scaffold protein] + N(6)-[(R)-dihydrolipoyl]-L-lysyl-[protein] + 4 Fe(3+) + 2 hydrogen sulfide + 2 5'-deoxyadenosine + 2 L-methionine + 2 reduced [2Fe-2S]-[ferredoxin]. Its pathway is protein modification; protein lipoylation via endogenous pathway; protein N(6)-(lipoyl)lysine from octanoyl-[acyl-carrier-protein]: step 2/2. Its function is as follows. Catalyzes the radical-mediated insertion of two sulfur atoms into the C-6 and C-8 positions of the octanoyl moiety bound to the lipoyl domains of lipoate-dependent enzymes, thereby converting the octanoylated domains into lipoylated derivatives. This chain is Lipoyl synthase, found in Rhizobium etli (strain ATCC 51251 / DSM 11541 / JCM 21823 / NBRC 15573 / CFN 42).